We begin with the raw amino-acid sequence, 63 residues long: Omega-conotoxin Eu1.6 (63 aa).

A signal peptide spans 1 to 21 (MGMRMMFTVFLLVVLATTVVS). Residues 22–47 (FTSDRAPDGRNAAAKAFGLITPTVRK) constitute a propeptide that is removed on maturation. Intrachain disulfides connect cysteine 49–cysteine 55 and cysteine 50–cysteine 63. The segment at 51-53 (SNP) is ser-Xaa-Pro motif, crucial for potent interaction with nAChR.

Belongs to the conotoxin A superfamily. As to expression, expressed by the venom duct.

The protein resides in the secreted. Functionally, this amidated peptide potently and teversibly inhibits Cav2.2/CACNA1B. Steady-state inactivation is enhanced at hyperpolarized membrane potentials. Also shows a weak interaction at alpha-3-beta-4/ CHRNA3-CHRNB4 and alpha-7/CHRNA7 nAChRs subtypes. In vivo, exhibits a potent analgesic activity in rat partial sciatic nerve injury and chronic constriction injury models. In Conus eburneus (Ivory cone), this protein is Omega-conotoxin Eu1.6.